The primary structure comprises 421 residues: UDP-N-acetylglucosamine 1-carboxyvinyltransferase (421 aa).

22 to 23 (KN) provides a ligand contact to phosphoenolpyruvate. A UDP-N-acetyl-alpha-D-glucosamine-binding site is contributed by Arg-92. The active-site Proton donor is the Cys-116. Cys-116 is modified (2-(S-cysteinyl)pyruvic acid O-phosphothioketal). Residues Asp-307 and Val-329 each coordinate UDP-N-acetyl-alpha-D-glucosamine.

This sequence belongs to the EPSP synthase family. MurA subfamily.

It localises to the cytoplasm. It carries out the reaction phosphoenolpyruvate + UDP-N-acetyl-alpha-D-glucosamine = UDP-N-acetyl-3-O-(1-carboxyvinyl)-alpha-D-glucosamine + phosphate. It functions in the pathway cell wall biogenesis; peptidoglycan biosynthesis. Its function is as follows. Cell wall formation. Adds enolpyruvyl to UDP-N-acetylglucosamine. This is UDP-N-acetylglucosamine 1-carboxyvinyltransferase from Kosmotoga olearia (strain ATCC BAA-1733 / DSM 21960 / TBF 19.5.1).